The sequence spans 419 residues: Metacaspase-1 (419 aa).

Residues 1–109 (MSGYPGYNNG…PPQGMHAFGQ (109 aa)) form a disordered region. Pro residues-rich tracts occupy residues 18-37 (QYPP…PPPQ) and 45-61 (QPPP…PPPQ). The span at 83-95 (SVNSNAYTNGNQN) shows a compositional bias: polar residues. Catalysis depends on residues His210 and Cys266.

Belongs to the peptidase C14B family.

Its function is as follows. Involved in cell death (apoptosis). This chain is Metacaspase-1 (casA), found in Botryotinia fuckeliana (strain B05.10) (Noble rot fungus).